Consider the following 379-residue polypeptide: Protein psi1 (379 aa).

One can recognise a J domain in the interval 1–70 (MVADTKLYDC…RKLYDQYGIT (70 aa)). Disordered regions lie at residues 69-95 (ITEG…FPGA) and 176-205 (FGGG…AQNE). Positions 81–95 (AEGGPGAGFGGFPGA) are enriched in gly residues.

Required for nuclear migration during mitosis. It is required for the normal initiation of translation. This Schizosaccharomyces pombe (strain 972 / ATCC 24843) (Fission yeast) protein is Protein psi1 (psi1).